Reading from the N-terminus, the 367-residue chain is Molybdopterin synthase catalytic subunit (367 aa).

Residues 101-102, lysine 117, and 124-126 each bind substrate; these read HR and KKE. The interval 325-350 is disordered; the sequence is RHFTKREPSSMEAAPPKKSRKKSYSA.

Belongs to the MoaE family. MOCS2B subfamily. Heterotetramer; composed of 2 small (Mocs2A) and 2 large (Mocs2B) subunits. Component of the Ada2a-containing (ATAC) complex composed of at least Ada2a, Atac1, Hcf, Ada3, Gcn5, Mocs2B, Charac-14, Atac3, Atac2, NC2beta and wds.

Its subcellular location is the cytoplasm. The protein resides in the nucleus. The enzyme catalyses 2 [molybdopterin-synthase sulfur-carrier protein]-C-terminal-Gly-aminoethanethioate + cyclic pyranopterin phosphate + H2O = molybdopterin + 2 [molybdopterin-synthase sulfur-carrier protein]-C-terminal Gly-Gly + 2 H(+). The protein operates within cofactor biosynthesis; molybdopterin biosynthesis. Its function is as follows. Catalytic subunit of the molybdopterin synthase complex, a complex that catalyzes the conversion of precursor Z into molybdopterin. Acts by mediating the incorporation of 2 sulfur atoms from thiocarboxylated Mocs2A into precursor Z to generate a dithiolene group. Involved during biosynthesis of the molybdenum cofactor. This is Molybdopterin synthase catalytic subunit from Drosophila melanogaster (Fruit fly).